The primary structure comprises 133 residues: Small ribosomal subunit protein uS11 (133 aa).

The protein belongs to the universal ribosomal protein uS11 family. As to quaternary structure, part of the 30S ribosomal subunit.

In terms of biological role, located on the platform of the 30S subunit. The sequence is that of Small ribosomal subunit protein uS11 from Hyperthermus butylicus (strain DSM 5456 / JCM 9403 / PLM1-5).